The primary structure comprises 275 residues: Hydroxyethylthiazole kinase (275 aa).

M50 provides a ligand contact to substrate. ATP is bound by residues R126 and S171. Residue A200 coordinates substrate.

This sequence belongs to the Thz kinase family. It depends on Mg(2+) as a cofactor.

The enzyme catalyses 5-(2-hydroxyethyl)-4-methylthiazole + ATP = 4-methyl-5-(2-phosphooxyethyl)-thiazole + ADP + H(+). It participates in cofactor biosynthesis; thiamine diphosphate biosynthesis; 4-methyl-5-(2-phosphoethyl)-thiazole from 5-(2-hydroxyethyl)-4-methylthiazole: step 1/1. In terms of biological role, catalyzes the phosphorylation of the hydroxyl group of 4-methyl-5-beta-hydroxyethylthiazole (THZ). In Acinetobacter baumannii (strain ATCC 17978 / DSM 105126 / CIP 53.77 / LMG 1025 / NCDC KC755 / 5377), this protein is Hydroxyethylthiazole kinase.